The primary structure comprises 223 residues: Probable transaldolase (223 aa).

Residue lysine 92 is the Schiff-base intermediate with substrate of the active site.

The protein belongs to the transaldolase family. Type 3B subfamily.

Its subcellular location is the cytoplasm. The enzyme catalyses D-sedoheptulose 7-phosphate + D-glyceraldehyde 3-phosphate = D-erythrose 4-phosphate + beta-D-fructose 6-phosphate. The protein operates within carbohydrate degradation; pentose phosphate pathway; D-glyceraldehyde 3-phosphate and beta-D-fructose 6-phosphate from D-ribose 5-phosphate and D-xylulose 5-phosphate (non-oxidative stage): step 2/3. In terms of biological role, transaldolase is important for the balance of metabolites in the pentose-phosphate pathway. The polypeptide is Probable transaldolase (Thermus thermophilus (strain ATCC BAA-163 / DSM 7039 / HB27)).